The primary structure comprises 68 residues: UPF0253 protein ASA_2184 (68 aa).

This sequence belongs to the UPF0253 family.

This is UPF0253 protein ASA_2184 from Aeromonas salmonicida (strain A449).